Reading from the N-terminus, the 144-residue chain is Large ribosomal subunit protein uL15 (144 aa).

The tract at residues 1–57 (MKLNDLSPAPGSRREKHRPGRGIGSGLGKTGGRGHKGQTSRSGGSIAPGFEGGQQPL) is disordered. Gly residues predominate over residues 21–31 (RGIGSGLGKTG).

Belongs to the universal ribosomal protein uL15 family. In terms of assembly, part of the 50S ribosomal subunit.

In terms of biological role, binds to the 23S rRNA. The protein is Large ribosomal subunit protein uL15 of Pseudomonas putida (strain ATCC 700007 / DSM 6899 / JCM 31910 / BCRC 17059 / LMG 24140 / F1).